A 267-amino-acid chain; its full sequence is 4,5-DOPA dioxygenase extradiol (267 aa).

Zn(2+) contacts are provided by His9, His47, His168, and His222.

The protein belongs to the DODA-type extradiol aromatic ring-opening dioxygenase family. It depends on Zn(2+) as a cofactor. Fe(2+) is required as a cofactor. In terms of tissue distribution, expressed in petals. Not detected in leaves, stems and roots.

The protein localises to the cytoplasm. It catalyses the reaction L-dopa + O2 = 4-(L-alanin-3-yl)-2-hydroxy-cis,cis-muconate 6-semialdehyde + H(+). The protein operates within pigment biosynthesis; betalain biosynthesis. In terms of biological role, opens the cyclic ring of dihydroxy-phenylalanine (DOPA) between carbons 4 and 5, thus producing an unstable seco-DOPA that rearranges nonenzymatically to betalamic acid. Produces mainly (S)-betalamic acid. Required for the coloration of flowers. This is 4,5-DOPA dioxygenase extradiol (DOD) from Mirabilis jalapa (Garden four-o'clock).